Reading from the N-terminus, the 188-residue chain is Elongation factor P (188 aa).

This sequence belongs to the elongation factor P family.

The protein localises to the cytoplasm. The protein operates within protein biosynthesis; polypeptide chain elongation. Its function is as follows. Involved in peptide bond synthesis. Stimulates efficient translation and peptide-bond synthesis on native or reconstituted 70S ribosomes in vitro. Probably functions indirectly by altering the affinity of the ribosome for aminoacyl-tRNA, thus increasing their reactivity as acceptors for peptidyl transferase. This Nitrobacter hamburgensis (strain DSM 10229 / NCIMB 13809 / X14) protein is Elongation factor P.